Reading from the N-terminus, the 367-residue chain is Glycolate oxidase 3 (367 aa).

In terms of domain architecture, FMN hydroxy acid dehydrogenase spans 1-360 (MELITNVSEY…TRNHVITDSD (360 aa)). Y25 is a glyoxylate binding site. Residues 78-80 (PSA), S107, 128-130 (QLY), and T156 contribute to the FMN site. Y130 contributes to the glyoxylate binding site. Glyoxylate is bound at residue R165. The FMN site is built by K231 and S253. Glyoxylate contacts are provided by H255 and R258. The active-site Proton acceptor is H255. Residues 286–290 (DGGVR) and 309–310 (GR) each bind FMN. A Microbody targeting signal motif is present at residues 365–367 (SRL).

The protein belongs to the FMN-dependent alpha-hydroxy acid dehydrogenase family. In terms of assembly, homotetramer. It depends on FMN as a cofactor.

It is found in the peroxisome. The catalysed reaction is glycolate + O2 = glyoxylate + H2O2. It functions in the pathway photosynthesis; photorespiration; glycine from 2-phosphoglycolate: step 2/3. Catalyzes the oxidation of glycolate to glyoxylate, with a reduction of O2 to H2O2. Is a key enzyme in photorespiration in green plants. This is Glycolate oxidase 3 (GLO3) from Oryza sativa subsp. indica (Rice).